A 733-amino-acid chain; its full sequence is DNA-binding protein SATB2 (733 aa).

The disordered stretch occupies residues 1–47 (MERRSESPCLRDSPDRRSGSPDVKGPPPVKVARLEQNGSPMGARGRP). Residue Ser20 is modified to Phosphoserine. Residues Lys24 and Lys30 each participate in a glycyl lysine isopeptide (Lys-Gly) (interchain with G-Cter in SUMO2) cross-link. Ser39 bears the Phosphoserine mark. The 102-residue stretch at 57 to 158 (GLMIPVFCVV…VVTLKIQLQS (102 aa)) folds into the CMP domain. Lys161 is covalently cross-linked (Glycyl lysine isopeptide (Lys-Gly) (interchain with G-Cter in SUMO2)). A CUTL domain is found at 161–234 (KLEDLPAEQW…WYKKYKKIKV (74 aa)). A Glycyl lysine isopeptide (Lys-Gly) (interchain with G-Cter in SUMO) cross-link involves residue Lys233. Residue Lys350 forms a Glycyl lysine isopeptide (Lys-Gly) (interchain with G-Cter in SUMO); alternate linkage. Lys350 is covalently cross-linked (Glycyl lysine isopeptide (Lys-Gly) (interchain with G-Cter in SUMO2); alternate). Positions 350–437 (KPEPTNSSVE…ERDRIYQDER (88 aa)) form a DNA-binding region, CUT 1. The disordered stretch occupies residues 435 to 473 (DERERSMNPNVSMVSSASSSPSSSRTPQAKTSTPTTDLP). Low complexity predominate over residues 441-458 (MNPNVSMVSSASSSPSSS). Phosphoserine is present on Ser454. The segment covering 459 to 470 (RTPQAKTSTPTT) has biased composition (polar residues). At Thr467 the chain carries Phosphothreonine. Positions 473-560 (PIKVDGANVN…ERDVIYEEES (88 aa)) form a DNA-binding region, CUT 2. Lys475 participates in a covalent cross-link: Glycyl lysine isopeptide (Lys-Gly) (interchain with G-Cter in SUMO2). Disordered stretches follow at residues 580-617 (QVLH…KPRS) and 691-733 (DEEL…TDQR). Ser594 is subject to Phosphoserine. A DNA-binding region (homeobox) is located at residues 615-674 (PRSRTKISLEALGILQSFIHDVGLYPDQEAIHTLSAQLDLPKHTIIKFFQNQRYHVKHHG). A compositionally biased stretch (acidic residues) spans 694–708 (LLTESEENDSEEGSE). The segment covering 709-733 (EMYKVEAEEENADKSKAAPAETDQR) has biased composition (basic and acidic residues). Lys724 participates in a covalent cross-link: Glycyl lysine isopeptide (Lys-Gly) (interchain with G-Cter in SUMO2).

Belongs to the CUT homeobox family. In terms of assembly, interacts with PIAS1. Interacts with ATF4 and RUNX2; resulting in enhanced DNA binding and transactivation by these transcription factors. Post-translationally, sumoylated by PIAS1. Sumoylation promotes nuclear localization, but represses transcription factor activity. Expressed in cortical neurons that extend axons across the corpus callosum. Also expressed in branchial arches and in cells of the osteoblast lineage, but not in chondrocytes and osteoclasts.

It localises to the nucleus matrix. Binds to DNA, at nuclear matrix- or scaffold-associated regions. Thought to recognize the sugar-phosphate structure of double-stranded DNA. Transcription factor controlling nuclear gene expression, by binding to matrix attachment regions (MARs) of DNA and inducing a local chromatin-loop remodeling. Acts as a docking site for several chromatin remodeling enzymes and also by recruiting corepressors (HDACs) or coactivators (HATs) directly to promoters and enhancers. Required for the initiation of the upper-layer neurons (UL1) specific genetic program and for the inactivation of deep-layer neurons (DL) and UL2 specific genes, probably by modulating Bcl11b expression. Repressor of Ctip2 and regulatory determinant of corticocortical connections in the developing cerebral cortex. May play an important role in palate formation. Acts as a molecular node in a transcriptional network regulating skeletal development and osteoblast differentiation. This chain is DNA-binding protein SATB2 (Satb2), found in Mus musculus (Mouse).